We begin with the raw amino-acid sequence, 257 residues long: UPF0246 protein Ping_3037 (257 aa).

The protein belongs to the UPF0246 family.

The polypeptide is UPF0246 protein Ping_3037 (Psychromonas ingrahamii (strain DSM 17664 / CCUG 51855 / 37)).